Reading from the N-terminus, the 325-residue chain is tRNA dimethylallyltransferase (325 aa).

21-28 (GPTASGKS) lines the ATP pocket. Residue 23–28 (TASGKS) participates in substrate binding. The segment at 166–170 (QRLAR) is interaction with substrate tRNA.

The protein belongs to the IPP transferase family. As to quaternary structure, monomer. Mg(2+) is required as a cofactor.

It carries out the reaction adenosine(37) in tRNA + dimethylallyl diphosphate = N(6)-dimethylallyladenosine(37) in tRNA + diphosphate. Catalyzes the transfer of a dimethylallyl group onto the adenine at position 37 in tRNAs that read codons beginning with uridine, leading to the formation of N6-(dimethylallyl)adenosine (i(6)A). The protein is tRNA dimethylallyltransferase of Acidiphilium cryptum (strain JF-5).